Reading from the N-terminus, the 315-residue chain is MEKFKGNKVVLVGNGAVGSSYAFAMLNQGACDEFVIIDLNEDKAKGDAMDLNHGVVYAPSPMQVKYGTYEDCHDASLIVICAGAAQKPGETRLDLVGKNMKIFKSIVDEIMKSGFDGIFLIATNPVDVLTYAVQKFSGLPENQVIGSGTILDTARFRHLLSQEFNVSPNSVHGYIIGEHGDSELAVWSGTNIAGNSLYDILNENPEKQKLIEEIFVNTRDAAYEIIKAKGATYYGVAMGLMRISKAILNNENVVLTVSAKLNGEYGHDDVYIGVPAIINRNGIREVLETPLNTEEKEKFAKSVETLKAIQTPFFS.

Residues Val17, Asp38, Lys43, Tyr69, and 83-84 (GA) each bind NAD(+). Substrate contacts are provided by Gln86 and Arg92. Residues Ser105, 122 to 124 (ATN), and Ser147 contribute to the NAD(+) site. 124–127 (NPVD) contacts substrate. 152–155 (DTAR) contacts substrate. Arg157 and His172 together coordinate beta-D-fructose 1,6-bisphosphate. The Proton acceptor role is filled by His179. Tyr223 is subject to Phosphotyrosine. A substrate-binding site is contributed by Thr232.

This sequence belongs to the LDH/MDH superfamily. LDH family. Homotetramer.

It is found in the cytoplasm. It catalyses the reaction (S)-lactate + NAD(+) = pyruvate + NADH + H(+). It functions in the pathway fermentation; pyruvate fermentation to lactate; (S)-lactate from pyruvate: step 1/1. Allosterically activated by fructose 1,6-bisphosphate (FBP). In terms of biological role, catalyzes the conversion of lactate to pyruvate. This is L-lactate dehydrogenase from Macrococcus caseolyticus (strain JCSC5402) (Macrococcoides caseolyticum).